A 308-amino-acid polypeptide reads, in one-letter code: CMP-N-acetylneuraminate:beta-galactoside alpha-2,3-sialyltransferase (308 aa).

The Proton acceptor role is filled by Asp201. CMP-N-acetyl-beta-neuraminate-binding positions include 221 to 225, 242 to 243, and 262 to 263; these read LPHPR, FE, and SS. His223 functions as the Proton donor in the catalytic mechanism.

Belongs to the glycosyltransferase 52 family. It depends on Divalent metal cations are not required for the alpha-2,3-sialyltransferase activity. as a cofactor.

In terms of biological role, catalyzes the transfer of sialic acid from the substrate CMP-N-acetylneuraminate to lactosyl lipids as preferred acceptor substrates in vitro, forming alpha-2,3-linked sialosides. Beta-1,4-linked galactosyl lipids are better substrates than beta-1,3-linked galactosyl lipids. The natural acceptor substrate may be cell surface oligosaccharides in lipooligosaccharide (LOS), whose sialylation has been demonstrated vital for the virulence of P.multocida. The protein is CMP-N-acetylneuraminate:beta-galactoside alpha-2,3-sialyltransferase (lst) of Pasteurella multocida (strain Pm70).